The following is a 152-amino-acid chain: MSDAQQPVFNIEKLYVKDLSVEVPNAPAVYLEREAPQMEVNMSTESRALNEDMYHSSITVTVTAKLGDKTMFLVECTQAGIFRIQNVPQDQMPMVLGIGCPNIVFPYLRETVSDVVIRAGFPPLLLNPVNFEAIFVQQQQAQQQQAGAAQTH.

Belongs to the SecB family. As to quaternary structure, homotetramer, a dimer of dimers. One homotetramer interacts with 1 SecA dimer.

The protein resides in the cytoplasm. In terms of biological role, one of the proteins required for the normal export of preproteins out of the cell cytoplasm. It is a molecular chaperone that binds to a subset of precursor proteins, maintaining them in a translocation-competent state. It also specifically binds to its receptor SecA. The polypeptide is Protein-export protein SecB (Thiobacillus denitrificans (strain ATCC 25259 / T1)).